The primary structure comprises 300 residues: MAVYAVGDLQGCLEPLQCLLEHVRFDPVQDRLWLVGDLVNRGPQSLQTLRYLYSIRESLVCVLGNHDLHLLAVARKNELLKKGDTLREILEAPDRDELLRWVRQQKLMHYDAERNIAMVHAGIAPQWSVKKALKQAAEVEHALQDDQLYGAFLDGMYGNEPAKWNNDLQGVTRLRVITNYFTRMRFCTSDGKLDLKSKEGVGTAIPGYAPWFSHQNRKTRDVKIIFGHWAALEGRCDEPGVFALDSGCVWGGAMTLLNVDTLERHQCNCDAVGNAATGIIASAQPGNAHIQQIPAQEPKQ.

It belongs to the Ap4A hydrolase family.

The catalysed reaction is P(1),P(4)-bis(5'-adenosyl) tetraphosphate + H2O = 2 ADP + 2 H(+). Functionally, hydrolyzes diadenosine 5',5'''-P1,P4-tetraphosphate to yield ADP. This chain is Bis(5'-nucleosyl)-tetraphosphatase, symmetrical, found in Pseudomonas syringae pv. tomato (strain ATCC BAA-871 / DC3000).